Reading from the N-terminus, the 152-residue chain is HMG-Y-related protein B (152 aa).

One can recognise an H15 domain in the interval 1-54; it reads ALNEADGSNKSAISKYIETTYGELPDETVLGSHLNKMKESGELAFKQNNYMKAD. The segment at 40–152 is disordered; it reads SGELAFKQNN…PQLTEVSVES (113 aa). DNA-binding regions (a.T hook) lie at residues 60-68, 82-90, 108-116, and 132-140; these read KRGRGRPPK, PRPRGRPPK, GRPRGRPKK, and GRPRGRPPK.

It belongs to the HMGA family.

The protein localises to the nucleus. The chain is HMG-Y-related protein B from Glycine max (Soybean).